The following is a 247-amino-acid chain: Putative methyltransferase GWCH70_2453 (247 aa).

Belongs to the methyltransferase superfamily.

May be a S-adenosyl-L-methionine (SAM)-dependent methyltransferase. This chain is Putative methyltransferase GWCH70_2453, found in Geobacillus sp. (strain WCH70).